Here is a 234-residue protein sequence, read N- to C-terminus: Leucyl/phenylalanyl-tRNA--protein transferase (234 aa).

This sequence belongs to the L/F-transferase family.

The protein localises to the cytoplasm. The catalysed reaction is N-terminal L-lysyl-[protein] + L-leucyl-tRNA(Leu) = N-terminal L-leucyl-L-lysyl-[protein] + tRNA(Leu) + H(+). The enzyme catalyses N-terminal L-arginyl-[protein] + L-leucyl-tRNA(Leu) = N-terminal L-leucyl-L-arginyl-[protein] + tRNA(Leu) + H(+). It catalyses the reaction L-phenylalanyl-tRNA(Phe) + an N-terminal L-alpha-aminoacyl-[protein] = an N-terminal L-phenylalanyl-L-alpha-aminoacyl-[protein] + tRNA(Phe). Functions in the N-end rule pathway of protein degradation where it conjugates Leu, Phe and, less efficiently, Met from aminoacyl-tRNAs to the N-termini of proteins containing an N-terminal arginine or lysine. The protein is Leucyl/phenylalanyl-tRNA--protein transferase of Salmonella arizonae (strain ATCC BAA-731 / CDC346-86 / RSK2980).